A 311-amino-acid polypeptide reads, in one-letter code: Porphobilinogen deaminase (311 aa).

At cysteine 241 the chain carries S-(dipyrrolylmethanemethyl)cysteine.

The protein belongs to the HMBS family. Monomer. Dipyrromethane serves as cofactor.

The enzyme catalyses 4 porphobilinogen + H2O = hydroxymethylbilane + 4 NH4(+). Its pathway is porphyrin-containing compound metabolism; protoporphyrin-IX biosynthesis; coproporphyrinogen-III from 5-aminolevulinate: step 2/4. Its function is as follows. Tetrapolymerization of the monopyrrole PBG into the hydroxymethylbilane pre-uroporphyrinogen in several discrete steps. The sequence is that of Porphobilinogen deaminase from Shouchella clausii (strain KSM-K16) (Alkalihalobacillus clausii).